A 355-amino-acid chain; its full sequence is tRNA-specific 2-thiouridylase MnmA (355 aa).

ATP-binding positions include 6 to 13 (LLSGGVDS) and Leu33. The Nucleophile role is filled by Cys100. Cys100 and Cys195 form a disulfide bridge. Gly123 is a binding site for ATP. An interaction with tRNA region spans residues 145–147 (KDQ). The active-site Cysteine persulfide intermediate is the Cys195.

It belongs to the MnmA/TRMU family.

Its subcellular location is the cytoplasm. The catalysed reaction is S-sulfanyl-L-cysteinyl-[protein] + uridine(34) in tRNA + AH2 + ATP = 2-thiouridine(34) in tRNA + L-cysteinyl-[protein] + A + AMP + diphosphate + H(+). Functionally, catalyzes the 2-thiolation of uridine at the wobble position (U34) of tRNA, leading to the formation of s(2)U34. The chain is tRNA-specific 2-thiouridylase MnmA from Borrelia garinii subsp. bavariensis (strain ATCC BAA-2496 / DSM 23469 / PBi) (Borreliella bavariensis).